The following is a 207-amino-acid chain: Outer-membrane lipoprotein LolB (207 aa).

Residues 1 to 21 (MPMRKRHFYRLLPLASLLLAA) form the signal peptide. Residue Cys-22 is the site of N-palmitoyl cysteine attachment. A lipid anchor (S-diacylglycerol cysteine) is attached at Cys-22.

It belongs to the LolB family. Monomer.

It is found in the cell outer membrane. Plays a critical role in the incorporation of lipoproteins in the outer membrane after they are released by the LolA protein. In Yersinia pestis bv. Antiqua (strain Antiqua), this protein is Outer-membrane lipoprotein LolB.